The primary structure comprises 381 residues: tRNA-specific 2-thiouridylase MnmA (381 aa).

ATP contacts are provided by residues 9-16 (GMSGGVDS) and methionine 35. The interval 95–97 (NPD) is interaction with target base in tRNA. Residue cysteine 100 is the Nucleophile of the active site. Cysteine 100 and cysteine 196 are joined by a disulfide. Glycine 124 contacts ATP. The tract at residues 146–148 (KDQ) is interaction with tRNA. Cysteine 196 serves as the catalytic Cysteine persulfide intermediate. The segment at 308 to 309 (RY) is interaction with tRNA.

The protein belongs to the MnmA/TRMU family.

It is found in the cytoplasm. It carries out the reaction S-sulfanyl-L-cysteinyl-[protein] + uridine(34) in tRNA + AH2 + ATP = 2-thiouridine(34) in tRNA + L-cysteinyl-[protein] + A + AMP + diphosphate + H(+). Functionally, catalyzes the 2-thiolation of uridine at the wobble position (U34) of tRNA, leading to the formation of s(2)U34. The polypeptide is tRNA-specific 2-thiouridylase MnmA (Paraburkholderia xenovorans (strain LB400)).